A 157-amino-acid chain; its full sequence is Phosphopantetheine adenylyltransferase (157 aa).

Substrate is bound at residue Thr-10. ATP is bound by residues 10-11 and His-18; that span reads TF. 3 residues coordinate substrate: Lys-42, Leu-74, and Arg-88. ATP is bound by residues 89–91, Glu-99, and 124–130; these read GLR and NAFISSS.

Belongs to the bacterial CoaD family. Homohexamer. It depends on Mg(2+) as a cofactor.

It localises to the cytoplasm. The enzyme catalyses (R)-4'-phosphopantetheine + ATP + H(+) = 3'-dephospho-CoA + diphosphate. It functions in the pathway cofactor biosynthesis; coenzyme A biosynthesis; CoA from (R)-pantothenate: step 4/5. Its activity is regulated as follows. Tightly binds to CoA, which is presumably a feedback inhibitor. Potently inhibited by D-amethopterin, which simultaneously occupies the 4'-phosphopantetheine- and ATP-binding sites; following treatment with D-amethopterin, H.pylori exhibits morphological characteristics associated with cell death, showing that D-amethopterin displays antimicrobial activity. In terms of biological role, reversibly transfers an adenylyl group from ATP to 4'-phosphopantetheine, yielding dephospho-CoA (dPCoA) and pyrophosphate. This is Phosphopantetheine adenylyltransferase from Helicobacter pylori (strain ATCC 700392 / 26695) (Campylobacter pylori).